The primary structure comprises 349 residues: Soluble TNF receptor II (349 aa).

An N-terminal signal peptide occupies residues 1-19 (MRSVLYSYILFLSCIIING). TNFR-Cys repeat units follow at residues 31 to 65 (KCKDNEYRSRNLCCLSCPPGTYASRLCDSKTNTQC) and 67 to 108 (PCGS…NRIC). 6 cysteine pairs are disulfide-bonded: C32–C43, C44–C57, C47–C65, C68–C83, C86–C100, and C90–C108. Residues N101, N190, N249, N277, and N313 are each glycosylated (N-linked (GlcNAc...) asparagine; by host).

Belongs to the orthopoxvirus OPG002 family.

The protein localises to the secreted. In terms of biological role, inhibits host immune defense by binding to host TNF and various chemokines in the extracellular space. Binds host CC chemokines (beta chemokines) and CXC chemokines (alpha chemokines). This Monkeypox virus protein is Soluble TNF receptor II (OPG002).